Here is a 189-residue protein sequence, read N- to C-terminus: Photosystem I assembly protein Ycf4 (189 aa).

2 helical membrane passes run 31-51 and 70-90; these read TVIL…YFGF and VMSF…LTII.

The protein belongs to the Ycf4 family.

The protein localises to the plastid. It is found in the chloroplast thylakoid membrane. In terms of biological role, seems to be required for the assembly of the photosystem I complex. The protein is Photosystem I assembly protein Ycf4 of Chlorokybus atmophyticus (Soil alga).